The following is a 237-amino-acid chain: Phosphoribosylaminoimidazole-succinocarboxamide synthase (237 aa).

Belongs to the SAICAR synthetase family.

The enzyme catalyses 5-amino-1-(5-phospho-D-ribosyl)imidazole-4-carboxylate + L-aspartate + ATP = (2S)-2-[5-amino-1-(5-phospho-beta-D-ribosyl)imidazole-4-carboxamido]succinate + ADP + phosphate + 2 H(+). Its pathway is purine metabolism; IMP biosynthesis via de novo pathway; 5-amino-1-(5-phospho-D-ribosyl)imidazole-4-carboxamide from 5-amino-1-(5-phospho-D-ribosyl)imidazole-4-carboxylate: step 1/2. The chain is Phosphoribosylaminoimidazole-succinocarboxamide synthase from Oceanobacillus iheyensis (strain DSM 14371 / CIP 107618 / JCM 11309 / KCTC 3954 / HTE831).